The sequence spans 433 residues: Pyrimidine-nucleoside phosphorylase (433 aa).

81–83 (KHS) serves as a coordination point for phosphate. K(+) contacts are provided by Gly88 and Thr90. Phosphate contacts are provided by residues Thr92, 108–110 (KMS), and Thr120. 2 residues coordinate substrate: Arg168 and Lys187. Residues Leu243, Ala246, and Glu255 each contribute to the K(+) site.

This sequence belongs to the thymidine/pyrimidine-nucleoside phosphorylase family. In terms of assembly, homodimer. K(+) is required as a cofactor.

It carries out the reaction uridine + phosphate = alpha-D-ribose 1-phosphate + uracil. The enzyme catalyses thymidine + phosphate = 2-deoxy-alpha-D-ribose 1-phosphate + thymine. It catalyses the reaction 2'-deoxyuridine + phosphate = 2-deoxy-alpha-D-ribose 1-phosphate + uracil. In terms of biological role, catalyzes phosphorolysis of the pyrimidine nucleosides uridine, thymidine and 2'-deoxyuridine with the formation of the corresponding pyrimidine base and ribose-1-phosphate. The polypeptide is Pyrimidine-nucleoside phosphorylase (pdp) (Staphylococcus aureus (strain MSSA476)).